The following is a 78-amino-acid chain: Large ribosomal subunit protein bL28 (78 aa).

A disordered region spans residues 1–21 (MSRVCQVTGKRPMVGNNRSHA).

Belongs to the bacterial ribosomal protein bL28 family.

The chain is Large ribosomal subunit protein bL28 from Shewanella halifaxensis (strain HAW-EB4).